The chain runs to 610 residues: MVRMDLSRIRNFSIIAHVDHGKSTLADRILELTHAVSDREMREQFLDSLELERERGITIKASAVRVTYRAKDGEEYVFHLIDTPGHVDFTYEVSRALAAVEGVLLVVDASQGVEAETLAKFYMALEHGHVIIPVINKIDLPNARPLEVALEVEEVLGLPADEAIFASGKTGEGVEEILEAIVQRIPPPKGDPEAPLKALIFDSVYDAYQGVIPYLRLFEGRVRPGDRIRIYSTGKEFTVDKVGVFTPQGLVATEALEAGEVGWLVAAIRDIHDVQVGDTITLADRPTPSPYPGFRPAKPVVFAGLYPVDSGDYGKLRDALEKLKLNDAALTFEPESSTALGFGFRCGFLGLLHAEIVQERLEREFGLSLIATAPSVVYKVRLKSGEEVEVHNPADLPDPTRIEEILEPYVKLTIFTPEEYVGSLMQLLQEKRGRLVNMNYLPGAQKRVELVYEAPFAEILYDFHDRLKSVSRGYASMDYEQAGYRPGDLVKVNVLVHGEVVDALTFIAHREKAYTMARAIVDKLAEVIPRQLFEVPIQAAIGGKIIARATVKALRKDVLAKCYGGDVTRKKKLLEKQKEGKKRLKAIGKVEVPQEAFLAVLSAGRDEPKG.

One can recognise a tr-type G domain in the interval 7-189; it reads SRIRNFSIIA…AIVQRIPPPK (183 aa). Residues 19-24 and 136-139 each bind GTP; these read DHGKST and NKID.

This sequence belongs to the TRAFAC class translation factor GTPase superfamily. Classic translation factor GTPase family. LepA subfamily.

It localises to the cell inner membrane. The catalysed reaction is GTP + H2O = GDP + phosphate + H(+). In terms of biological role, required for accurate and efficient protein synthesis under certain stress conditions. May act as a fidelity factor of the translation reaction, by catalyzing a one-codon backward translocation of tRNAs on improperly translocated ribosomes. Back-translocation proceeds from a post-translocation (POST) complex to a pre-translocation (PRE) complex, thus giving elongation factor G a second chance to translocate the tRNAs correctly. Binds to ribosomes in a GTP-dependent manner. The protein is Elongation factor 4 of Thermus thermophilus (strain ATCC 27634 / DSM 579 / HB8).